A 290-amino-acid polypeptide reads, in one-letter code: Small ribosomal subunit protein uS2 (290 aa).

The protein belongs to the universal ribosomal protein uS2 family. As to quaternary structure, component of the small ribosomal subunit. Mature ribosomes consist of a small (40S) and a large (60S) subunit. The 40S subunit contains about 33 different proteins and 1 molecule of RNA (18S). The 60S subunit contains about 49 different proteins and 3 molecules of RNA (28S, 5.8S and 5S). Interacts with ribosomal protein S21.

The protein localises to the cytoplasm. Functionally, required for the assembly and/or stability of the 40S ribosomal subunit. Required for the processing of the 20S rRNA-precursor to mature 18S rRNA in a late step of the maturation of 40S ribosomal subunits. In Culex quinquefasciatus (Southern house mosquito), this protein is Small ribosomal subunit protein uS2.